Here is a 212-residue protein sequence, read N- to C-terminus: uncharacterized protein (212 aa).

Residues 87 to 105 are compositionally biased toward low complexity; it reads NNNNNNNNNNNHNHNNSNN. The disordered stretch occupies residues 87–107; the sequence is NNNNNNNNNNNHNHNNSNNTA.

This is an uncharacterized protein from Saccharomyces cerevisiae (strain ATCC 204508 / S288c) (Baker's yeast).